The following is a 204-amino-acid chain: LexA repressor (204 aa).

A DNA-binding region (H-T-H motif) is located at residues 27–47 (VREIGEAVGLASSSTVHGHLA). Active-site for autocatalytic cleavage activity residues include Ser126 and Lys164.

Belongs to the peptidase S24 family. Homodimer.

The enzyme catalyses Hydrolysis of Ala-|-Gly bond in repressor LexA.. Functionally, represses a number of genes involved in the response to DNA damage (SOS response), including recA and lexA. In the presence of single-stranded DNA, RecA interacts with LexA causing an autocatalytic cleavage which disrupts the DNA-binding part of LexA, leading to derepression of the SOS regulon and eventually DNA repair. This Listeria welshimeri serovar 6b (strain ATCC 35897 / DSM 20650 / CCUG 15529 / CIP 8149 / NCTC 11857 / SLCC 5334 / V8) protein is LexA repressor.